Here is a 261-residue protein sequence, read N- to C-terminus: Glucose 1-dehydrogenase 2 (261 aa).

11–35 serves as a coordination point for NADP(+); sequence VVTGGSKGLGRAMAVRFGQEQSKVV. Serine 145 contributes to the substrate binding site. The Proton acceptor role is filled by tyrosine 158.

The protein belongs to the short-chain dehydrogenases/reductases (SDR) family. As to quaternary structure, homotetramer.

It carries out the reaction D-glucose + NAD(+) = D-glucono-1,5-lactone + NADH + H(+). It catalyses the reaction D-glucose + NADP(+) = D-glucono-1,5-lactone + NADPH + H(+). The polypeptide is Glucose 1-dehydrogenase 2 (gdhII) (Priestia megaterium (Bacillus megaterium)).